Reading from the N-terminus, the 156-residue chain is Cyanate hydratase (156 aa).

Active-site residues include R96, E99, and S122.

This sequence belongs to the cyanase family.

It carries out the reaction cyanate + hydrogencarbonate + 3 H(+) = NH4(+) + 2 CO2. Functionally, catalyzes the reaction of cyanate with bicarbonate to produce ammonia and carbon dioxide. This chain is Cyanate hydratase, found in Escherichia coli (strain K12 / DH10B).